We begin with the raw amino-acid sequence, 351 residues long: Ferrochelatase (351 aa).

Fe cation is bound by residues H221 and E302.

This sequence belongs to the ferrochelatase family.

The protein localises to the cytoplasm. The catalysed reaction is heme b + 2 H(+) = protoporphyrin IX + Fe(2+). Its pathway is porphyrin-containing compound metabolism; protoheme biosynthesis; protoheme from protoporphyrin-IX: step 1/1. Catalyzes the ferrous insertion into protoporphyrin IX. This Bradyrhizobium sp. (strain BTAi1 / ATCC BAA-1182) protein is Ferrochelatase.